The primary structure comprises 143 residues: Transcriptional regulator MraZ (143 aa).

2 consecutive SpoVT-AbrB domains span residues 5–47 and 76–119; these read EYSH…PQKE and AAEC…SQEL.

The protein belongs to the MraZ family. In terms of assembly, forms oligomers.

Its subcellular location is the cytoplasm. The protein resides in the nucleoid. The protein is Transcriptional regulator MraZ of Carboxydothermus hydrogenoformans (strain ATCC BAA-161 / DSM 6008 / Z-2901).